The sequence spans 475 residues: MEPLAPMRLYTLSKRHFVLVFVVFFICFGLTIFVGIRGPKVIQTSAANFSLNNSKKLKPIQILSNPLSTYNQQLWLTCVVELDQSKETSIKTSFPMTVKVDGVAQDGTTMYIHNKVHNRTRTLTCAGKCAEIIVAHLGYLNYTQYTVIVGFEHLKLPIKGMNFTWKTYNPAFSRLEIWFRFFFVVLTFIVTCLFAHSLRKFSMRDWGIEQKWMSVLLPLLLLYNDPFFPLSFLVNSWLPGMLDDLFQSMFLCALLLFWLCVYHGIRVQGERKCLTFYLPKFFIVGLLWLASVTLGIWQTVNELHDPMYQYRVDTGNFQGMKVFFMVVAAVYILYLLFLIVRACSELRHMPYVDLRLKFLTALTFVVLVISIAILYLRFGAQVLQDNFVAELSTHYQNSAEFLSFYGLLNFYLYTLAFVYSPSKNALYESQLKDNPAFSMLNDSDDDVIYGSDYEEMPLQNGQAIRAKYKEESDSD.

Helical transmembrane passes span 16–36, 131–151, 175–195, 214–234, 245–265, 276–296, 320–340, 356–376, and 401–421; these read HFVL…FVGI, EIIV…IVGF, LEIW…CLFA, SVLL…SFLV, LFQS…YHGI, FYLP…TLGI, MKVF…FLIV, LKFL…ILYL, and FLSF…VYSP. S443 is subject to Phosphoserine.

Belongs to the TMEM181 family. As to quaternary structure, interacts with cytolethal distending toxin.

The protein localises to the membrane. Functionally, mediates action of cytolethal distending toxins (CDT), which are secreted by many pathogenic bacteria. Expression level of TMEM181 is rate-limiting for intoxication. The polypeptide is Transmembrane protein 181 (TMEM181) (Homo sapiens (Human)).